The chain runs to 330 residues: Aspartate--ammonia ligase (330 aa).

This sequence belongs to the class-II aminoacyl-tRNA synthetase family. AsnA subfamily.

It localises to the cytoplasm. The enzyme catalyses L-aspartate + NH4(+) + ATP = L-asparagine + AMP + diphosphate + H(+). It functions in the pathway amino-acid biosynthesis; L-asparagine biosynthesis; L-asparagine from L-aspartate (ammonia route): step 1/1. This is Aspartate--ammonia ligase from Streptococcus pyogenes serotype M49 (strain NZ131).